Reading from the N-terminus, the 485-residue chain is Glycogen synthase (485 aa).

Lys15 contacts ADP-alpha-D-glucose.

This sequence belongs to the glycosyltransferase 1 family. Bacterial/plant glycogen synthase subfamily.

The enzyme catalyses [(1-&gt;4)-alpha-D-glucosyl](n) + ADP-alpha-D-glucose = [(1-&gt;4)-alpha-D-glucosyl](n+1) + ADP + H(+). It participates in glycan biosynthesis; glycogen biosynthesis. Synthesizes alpha-1,4-glucan chains using ADP-glucose. The sequence is that of Glycogen synthase from Rhodospirillum rubrum (strain ATCC 11170 / ATH 1.1.1 / DSM 467 / LMG 4362 / NCIMB 8255 / S1).